Consider the following 130-residue polypeptide: Small ribosomal subunit protein uS11c (130 aa).

Belongs to the universal ribosomal protein uS11 family. Part of the 30S ribosomal subunit.

It localises to the plastid. The protein localises to the chloroplast. The polypeptide is Small ribosomal subunit protein uS11c (Anthoceros angustus (Hornwort)).